We begin with the raw amino-acid sequence, 618 residues long: 1-deoxy-D-xylulose-5-phosphate synthase (618 aa).

Thiamine diphosphate contacts are provided by residues H77 and G118–S120. D149 provides a ligand contact to Mg(2+). Thiamine diphosphate contacts are provided by residues G150–A151, N178, Y285, and E367. A Mg(2+)-binding site is contributed by N178.

It belongs to the transketolase family. DXPS subfamily. Homodimer. Mg(2+) is required as a cofactor. Thiamine diphosphate serves as cofactor.

It catalyses the reaction D-glyceraldehyde 3-phosphate + pyruvate + H(+) = 1-deoxy-D-xylulose 5-phosphate + CO2. The protein operates within metabolic intermediate biosynthesis; 1-deoxy-D-xylulose 5-phosphate biosynthesis; 1-deoxy-D-xylulose 5-phosphate from D-glyceraldehyde 3-phosphate and pyruvate: step 1/1. In terms of biological role, catalyzes the acyloin condensation reaction between C atoms 2 and 3 of pyruvate and glyceraldehyde 3-phosphate to yield 1-deoxy-D-xylulose-5-phosphate (DXP). The sequence is that of 1-deoxy-D-xylulose-5-phosphate synthase from Idiomarina loihiensis (strain ATCC BAA-735 / DSM 15497 / L2-TR).